Here is a 266-residue protein sequence, read N- to C-terminus: Large ribosomal subunit protein uL2c (266 aa).

A disordered region spans residues Met1–Ser24. Over residues Lys7–Ser24 the composition is skewed to polar residues.

Belongs to the universal ribosomal protein uL2 family. Part of the 50S ribosomal subunit.

It is found in the plastid. It localises to the chloroplast. This Nicotiana debneyi (Debney's tobacco) protein is Large ribosomal subunit protein uL2c (rpl2).